Consider the following 152-residue polypeptide: Transcriptional regulator MraZ (152 aa).

SpoVT-AbrB domains follow at residues 5–52 and 81–124; these read ASAI…PLHE and AHEV…DEQA.

It belongs to the MraZ family. Forms oligomers.

It localises to the cytoplasm. It is found in the nucleoid. The protein is Transcriptional regulator MraZ of Shewanella sp. (strain MR-7).